The chain runs to 333 residues: MEENDPKPGEAAAAVEGQRQPESSPGGGSGGGGGSSPGEADTGRRRALMLPAVLQAPGNHQHPHRITNFFIDNILRPEFGRRKDAGTCCAGAGGGRGGGAGGEGGASGAEGGGGAGGSEQLLGSGSREPRQNPPCAPGAGGPLPAAGSDSPGDGEGGSKTLSLHGGAKKGGDPGGPLDGSLKARGLGGGDLSVSSDSDSSQAGANLGAQPMLWPAWVYCTRYSDRPSSGPRSRKPKKKNPNKEDKRPRTAFTAEQLQRLKAEFQTNRYLTEQRRQSLAQELSLNESQIKIWFQNKRAKIKKATGNKNTLAVHLMAQGLYNHSTTAKEGKSDSE.

Disordered regions lie at residues 1 to 49 (MEEN…RALM), 95 to 206 (GRGG…GANL), and 223 to 250 (SDRP…PRTA). 2 stretches are compositionally biased toward gly residues: residues 25-36 (PGGGSGGGGGSS) and 95-117 (GRGG…GAGG). Low complexity-rich tracts occupy residues 142-151 (PLPAAGSDSP) and 191-200 (LSVSSDSDSS). The segment at residues 244-303 (DKRPRTAFTAEQLQRLKAEFQTNRYLTEQRRQSLAQELSLNESQIKIWFQNKRAKIKKAT) is a DNA-binding region (homeobox).

This sequence belongs to the engrailed homeobox family.

It is found in the nucleus. The polypeptide is Homeobox protein engrailed-2 (EN2) (Homo sapiens (Human)).